The sequence spans 419 residues: Histidine--tRNA ligase (419 aa).

The protein belongs to the class-II aminoacyl-tRNA synthetase family. In terms of assembly, homodimer.

The protein resides in the cytoplasm. It carries out the reaction tRNA(His) + L-histidine + ATP = L-histidyl-tRNA(His) + AMP + diphosphate + H(+). This is Histidine--tRNA ligase from Mycoplasmoides gallisepticum (strain R(low / passage 15 / clone 2)) (Mycoplasma gallisepticum).